The primary structure comprises 329 residues: Dapdiamide synthesis protein DdaC (329 aa).

Requires Fe(2+) as cofactor.

It participates in antibiotic biosynthesis. In terms of biological role, involved in dapdiamide antibiotics biosynthesis. Catalyzes the alpha-ketoglutarate-dependent epoxidation of the covalently bound N-beta-fumaramoyl-DAP-S-DdaD to generate N-beta-epoxysuccinamoyl-DAP in thioester linkage to DdaD. The protein is Dapdiamide synthesis protein DdaC of Enterobacter agglomerans (Erwinia herbicola).